The sequence spans 312 residues: MAGITSSTVGFNAVFTGITKTVSSHSLFSVDSKLCSLRLSKTELSFTNLTPSPRRAFAVTCRFGGGGGGYRFSGDNRRGRPKEAEIDEALDISSIRSATVRLIDGQQNMLGLVSKDEAVRMADDAELDLVILSPDADPPVVKMMDYSKYRYEQQKRKKDQQKKTTRMDLKELKMGYNIDQHDYSVRLRAAQKFLQDGDKVKVIVSMKGRENEFRNIAIELLRRFQTEIGELATEESKNFRDRNMFIILVPNKEMIRKPQEPPTRKKKKTAENEASASAAEITAEPEPEPEPEPEPEPEPEPEPEPEPLQIDS.

Residues 1-55 (MAGITSSTVGFNAVFTGITKTVSSHSLFSVDSKLCSLRLSKTELSFTNLTPSPRR) constitute a chloroplast transit peptide. Residues 253–263 (EMIRKPQEPPT) are compositionally biased toward basic and acidic residues. The tract at residues 253–312 (EMIRKPQEPPTRKKKKTAENEASASAAEITAEPEPEPEPEPEPEPEPEPEPEPEPLQIDS) is disordered. Low complexity predominate over residues 272-282 (NEASASAAEIT). Positions 283–305 (AEPEPEPEPEPEPEPEPEPEPEP) are enriched in acidic residues.

It belongs to the IF-3 family. As to quaternary structure, monomer. Highly expressed in young, newly emerged leaves.

It is found in the plastid. The protein localises to the chloroplast. Its function is as follows. Chloroplast translation initiation factor that is essential for the coordination of leaf and chloroplast development. IF-3 binds to the 30S ribosomal subunit and shifts the equilibrium between 70S ribosomes and their 50S and 30S subunits in favor of the free subunits, thus enhancing the availability of 30S subunits on which protein synthesis initiation begins. In Arabidopsis thaliana (Mouse-ear cress), this protein is Translation initiation factor IF3-2, chloroplastic.